Reading from the N-terminus, the 581-residue chain is ATP-dependent RNA helicase DBP3 (581 aa).

A disordered region spans residues 1 to 118; sequence MAATKHSLAD…ASSNSEAPSS (118 aa). Composition is skewed to basic and acidic residues over residues 7–35 and 53–62; these read SLADSEDRPTKKTKVDSEEKARLKAEKRE and DADRAAEKER. The span at 63–73 shows a compositional bias: basic residues; it reads KKAKKAKKLEK. Composition is skewed to low complexity over residues 80 to 89 and 106 to 118; these read AEASAEPAAE and TTEASSNSEAPSS. Positions 160 to 189 match the Q motif motif; that stretch reads LEFHQLPATNLLEKKPSPFANYKAPTPIQS. In terms of domain architecture, Helicase ATP-binding spans 192–365; that stretch reads WPFTLSGRDV…ATFMVSPVKI (174 aa). 205–212 contributes to the ATP binding site; the sequence is AETGSGKT. The DEAD box signature appears at 311–314; it reads DEAD. A Helicase C-terminal domain is found at 402–551; that stretch reads RLLEVLKEHQ…PVPEDLLKFG (150 aa).

This sequence belongs to the DEAD box helicase family. DDX5/DBP2 subfamily.

It localises to the nucleus. The protein localises to the nucleolus. It catalyses the reaction ATP + H2O = ADP + phosphate + H(+). Its function is as follows. ATP-dependent RNA helicase required for 60S ribosomal subunit synthesis. Involved in efficient pre-rRNA processing, predominantly at site A3, which is necessary for the normal formation of 25S and 5.8S rRNAs. The protein is ATP-dependent RNA helicase DBP3 (DBP3) of Gibberella zeae (strain ATCC MYA-4620 / CBS 123657 / FGSC 9075 / NRRL 31084 / PH-1) (Wheat head blight fungus).